A 158-amino-acid chain; its full sequence is 2-C-methyl-D-erythritol 2,4-cyclodiphosphate synthase (158 aa).

A divalent metal cation-binding residues include Asp9 and His11. 4-CDP-2-C-methyl-D-erythritol 2-phosphate is bound by residues 9-11 (DVH) and 35-36 (HS). An a divalent metal cation-binding site is contributed by His43. Residues 57-59 (DIG), 62-66 (FPDTD), 133-136 (TTSE), Phe140, and Arg143 each bind 4-CDP-2-C-methyl-D-erythritol 2-phosphate.

The protein belongs to the IspF family. As to quaternary structure, homotrimer. A divalent metal cation serves as cofactor.

The enzyme catalyses 4-CDP-2-C-methyl-D-erythritol 2-phosphate = 2-C-methyl-D-erythritol 2,4-cyclic diphosphate + CMP. Its pathway is isoprenoid biosynthesis; isopentenyl diphosphate biosynthesis via DXP pathway; isopentenyl diphosphate from 1-deoxy-D-xylulose 5-phosphate: step 4/6. Functionally, involved in the biosynthesis of isopentenyl diphosphate (IPP) and dimethylallyl diphosphate (DMAPP), two major building blocks of isoprenoid compounds. Catalyzes the conversion of 4-diphosphocytidyl-2-C-methyl-D-erythritol 2-phosphate (CDP-ME2P) to 2-C-methyl-D-erythritol 2,4-cyclodiphosphate (ME-CPP) with a corresponding release of cytidine 5-monophosphate (CMP). The protein is 2-C-methyl-D-erythritol 2,4-cyclodiphosphate synthase of Pasteurella multocida (strain Pm70).